The chain runs to 355 residues: Protein RecA (355 aa).

65–72 is a binding site for ATP; sequence GPESSGKT. Residues 333 to 355 form a disordered region; it reads IEEKDEKQAEAEKNENTNLFDEE. Residues 336-347 are compositionally biased toward basic and acidic residues; that stretch reads KDEKQAEAEKNE.

Belongs to the RecA family.

Its subcellular location is the cytoplasm. Its function is as follows. Can catalyze the hydrolysis of ATP in the presence of single-stranded DNA, the ATP-dependent uptake of single-stranded DNA by duplex DNA, and the ATP-dependent hybridization of homologous single-stranded DNAs. It interacts with LexA causing its activation and leading to its autocatalytic cleavage. This chain is Protein RecA, found in Staphylococcus carnosus (strain TM300).